The chain runs to 322 residues: MLPFNSCVYVLLIISLMSNCRALCRATALQGRSLCATGGPDAAFRAEHERLSAFESRPSSGSYDMRRALDPIEIETWFHIVSGETDADLVTDEMVILQLHYLQKAYEKASISYRLKGVTRHINETWARNGDDSAMKKALRRGGYSTLNVYFQTNLQPPSTTDFARWTSDGDNRHAYNSDLAPPSVLGFCTLPDPSINSSSPRSSYSKDGCNVLAKTMPGGPMTHYNRGGTAIHEIGHWNGLLHTFEGESCSEDNAGDYIADTPQQSVPTDGCPSQKDSCPDSPGLDDIHNFMDYSSDDCYASFTSNQLKRMRDMWFSMRKGK.

The first 22 residues, 1–22 (MLPFNSCVYVLLIISLMSNCRA), serve as a signal peptide directing secretion. N-linked (GlcNAc...) asparagine glycans are attached at residues Asn123 and Asn197. His233 is a Zn(2+) binding site. Glu234 is a catalytic residue. His237 contacts Zn(2+). Cys272 and Cys299 are joined by a disulfide.

This sequence belongs to the peptidase M43B family.

The protein localises to the secreted. Its function is as follows. Secreted metalloproteinase that allows assimilation of proteinaceous substrates. Plays a pivotal role as a pathogenicity determinant during infections and contributes to the ability of the pathogen to persist within the mammalian host. This Aspergillus fumigatus (strain CBS 144.89 / FGSC A1163 / CEA10) (Neosartorya fumigata) protein is Extracellular metalloprotease AFUB_008060.